Consider the following 275-residue polypeptide: Orotidine 5'-phosphate decarboxylase (275 aa).

K101 acts as the Proton donor in catalysis.

The protein belongs to the OMP decarboxylase family. Type 2 subfamily.

It catalyses the reaction orotidine 5'-phosphate + H(+) = UMP + CO2. The protein operates within pyrimidine metabolism; UMP biosynthesis via de novo pathway; UMP from orotate: step 2/2. The sequence is that of Orotidine 5'-phosphate decarboxylase from Leptospira interrogans serogroup Icterohaemorrhagiae serovar Lai (strain 56601).